A 244-amino-acid polypeptide reads, in one-letter code: tRNA (guanine-N(7)-)-methyltransferase (244 aa).

The disordered stretch occupies residues 1–24 (MTDSHVPHPESPAVEEGEERPHRR). Positions 74, 99, 126, and 149 each coordinate S-adenosyl-L-methionine. Residue aspartate 149 is part of the active site. Substrate is bound by residues lysine 153, aspartate 185, and 222-225 (TKFE).

Belongs to the class I-like SAM-binding methyltransferase superfamily. TrmB family.

It catalyses the reaction guanosine(46) in tRNA + S-adenosyl-L-methionine = N(7)-methylguanosine(46) in tRNA + S-adenosyl-L-homocysteine. It participates in tRNA modification; N(7)-methylguanine-tRNA biosynthesis. Catalyzes the formation of N(7)-methylguanine at position 46 (m7G46) in tRNA. The sequence is that of tRNA (guanine-N(7)-)-methyltransferase from Pseudomonas syringae pv. syringae (strain B728a).